Consider the following 107-residue polypeptide: Phosphoribosyl-ATP pyrophosphatase (107 aa).

Belongs to the PRA-PH family.

It localises to the cytoplasm. It carries out the reaction 1-(5-phospho-beta-D-ribosyl)-ATP + H2O = 1-(5-phospho-beta-D-ribosyl)-5'-AMP + diphosphate + H(+). Its pathway is amino-acid biosynthesis; L-histidine biosynthesis; L-histidine from 5-phospho-alpha-D-ribose 1-diphosphate: step 2/9. The protein is Phosphoribosyl-ATP pyrophosphatase of Sinorhizobium medicae (strain WSM419) (Ensifer medicae).